Reading from the N-terminus, the 105-residue chain is Cuticle protein AMP1A (105 aa).

Residues 1 to 21 (DRDAQTLTDERSDQGDGNFRY) form a disordered region. In terms of domain architecture, Chitin-binding type R&amp;R spans 16-81 (DGNFRYEFET…PSSDLLPVGP (66 aa)).

Arthrodial membrane.

This chain is Cuticle protein AMP1A, found in Homarus americanus (American lobster).